Reading from the N-terminus, the 61-residue chain is MAKKSMIAKQQRTPKFKVQEYTRCERCGRPHSVIRKFKLCRICFRELAYKGQIPGVKKASW.

Cysteine 24, cysteine 27, cysteine 40, and cysteine 43 together coordinate Zn(2+).

This sequence belongs to the universal ribosomal protein uS14 family. Zinc-binding uS14 subfamily. Part of the 30S ribosomal subunit. Contacts proteins S3 and S10. Zn(2+) serves as cofactor.

Its function is as follows. Binds 16S rRNA, required for the assembly of 30S particles and may also be responsible for determining the conformation of the 16S rRNA at the A site. The sequence is that of Small ribosomal subunit protein uS14B from Bacillus velezensis (strain DSM 23117 / BGSC 10A6 / LMG 26770 / FZB42) (Bacillus amyloliquefaciens subsp. plantarum).